A 146-amino-acid polypeptide reads, in one-letter code: Large ribosomal subunit protein uL15 (146 aa).

Positions 1-54 (MKLHELQPAAGSRKAPKRVGRGTGSGLGRNAGKGEKGQNARSGGGVRPGFEGGQ) are disordered. 2 stretches are compositionally biased toward gly residues: residues 21-31 (RGTGSGLGRNA) and 42-52 (SGGGVRPGFEG).

This sequence belongs to the universal ribosomal protein uL15 family. In terms of assembly, part of the 50S ribosomal subunit.

Binds to the 23S rRNA. The polypeptide is Large ribosomal subunit protein uL15 (Clostridium botulinum (strain Alaska E43 / Type E3)).